Here is a 330-residue protein sequence, read N- to C-terminus: uncharacterized protein (330 aa).

This is an uncharacterized protein from Acanthamoeba polyphaga (Amoeba).